A 1370-amino-acid polypeptide reads, in one-letter code: DNA-directed RNA polymerase subunit beta (1370 aa).

Belongs to the RNA polymerase beta chain family. As to quaternary structure, the RNAP catalytic core consists of 2 alpha, 1 beta, 1 beta' and 1 omega subunit. When a sigma factor is associated with the core the holoenzyme is formed, which can initiate transcription.

It catalyses the reaction RNA(n) + a ribonucleoside 5'-triphosphate = RNA(n+1) + diphosphate. In terms of biological role, DNA-dependent RNA polymerase catalyzes the transcription of DNA into RNA using the four ribonucleoside triphosphates as substrates. The polypeptide is DNA-directed RNA polymerase subunit beta (Bordetella petrii (strain ATCC BAA-461 / DSM 12804 / CCUG 43448)).